The chain runs to 131 residues: MSWQAYVDDHLMCEIDGNHLTAAAIVGHDGSVWAQSPNFPQYKPEEITGIMKDFDEPGSLAPTGLFLGGTKYMVIQGEPGVVIRGKKGTGGICVKKTGLSLILGIYDEPMTPGQCNMIVERLGDYLIEQGC.

It belongs to the profilin family. In terms of assembly, occurs in many kinds of cells as a complex with monomeric actin in a 1:1 ratio.

The protein resides in the cytoplasm. Its subcellular location is the cytoskeleton. Functionally, binds to actin and affects the structure of the cytoskeleton. At high concentrations, profilin prevents the polymerization of actin, whereas it enhances it at low concentrations. By binding to PIP2, it inhibits the formation of IP3 and DG. The polypeptide is Profilin LP04 (Oryza sativa subsp. indica (Rice)).